The following is a 246-amino-acid chain: Non-structural protein ORF4b (246 aa).

Residues 1 to 28 (MEESLMDVPSTSGTQVYSRKARKRSHSP) are disordered. Basic residues predominate over residues 19–28 (RKARKRSHSP). The short motif at 22–38 (RKRSHSPTKKLRYVKRR) is the Nuclear localization motif element.

Interacts with host KPNA4; this interaction inhibits the nuclear import of NF-kappa-B complex.

It localises to the host nucleus. It is found in the host nucleolus. Its subcellular location is the host cytoplasm. Functionally, plays a role in the inhibition of host innate immunity by inhibiting the interaction between host IKBKE and MAVS. In turn, this inhibition prevents the production of host interferon beta. Additionally, inhibits host NF-kappa-B by interacting with host KPNA4 and thereby preventing the translocation of the NF-kappa-B complex into the nucleus by this importin. The protein is Non-structural protein ORF4b (ORF4b) of Camelus dromedarius (Dromedary).